The following is a 298-amino-acid chain: MTEPGASPEDPWVKASPVGAHAGEGRAGRARARRGAGRRGASLLSPKSPTLSVPRGCREDSSHPACAKVEYAYSDNSLDPGLFVESTRKGSVVSRANSIGSTSASSVPNTDDEDSDYHQEAYKESYKDRRRRAHTQAEQKRRDAIKRGYDDLQTIVPTCQQQDFSIGSQKLSKAIVLQKTIDYIQFLHKEKKKQEEEVSTLRKDVTALKIMKVNYEQIVKAHQDNPHEGEDQVSDQVKFNVFQGIMDSLFQSFNASISVASFQELSACVFSWIEEHCKPQTLREIVIGVLHQLKNQLY.

Residues Met1–His63 are disordered. A Phosphoserine modification is found at Ser7. Over residues Gly28 to Gly37 the composition is skewed to basic residues. Residues Ser45, Ser48, Ser74, Ser77, and Ser98 each carry the phosphoserine modification. Residues Ser91–Ile145 are disordered. A compositionally biased stretch (polar residues) spans Ser94–Asn109. Composition is skewed to basic and acidic residues over residues Asp116–Lys127 and Thr135–Ile145. In terms of domain architecture, bHLH spans Arg129–Leu187. A leucine-zipper region spans residues Lys140 to Gln160.

Efficient DNA binding requires dimerization with another bHLH protein. Binds DNA as a heterodimer with MAD1, MAD4, MNT, WBSCR14 and MLXIP. Can also bind DNA as a homodimer. Expressed in all tissues tested, including spleen, thymus, prostate, ovary, intestine, colon, peripheral blood leukocyte, heart, liver, skeletal muscle and kidney. Lower levels of expression in testis, brain, placenta and lung.

The protein resides in the cytoplasm. The protein localises to the nucleus. Functionally, transcription regulator. Forms a sequence-specific DNA-binding protein complex with MAD1, MAD4, MNT, WBSCR14 and MLXIP which recognizes the core sequence 5'-CACGTG-3'. The TCFL4-MAD1, TCFL4-MAD4, TCFL4-WBSCR14 complexes are transcriptional repressors. Plays a role in transcriptional activation of glycolytic target genes. Involved in glucose-responsive gene regulation. This is Max-like protein X (MLX) from Homo sapiens (Human).